A 330-amino-acid polypeptide reads, in one-letter code: Fructose-1,6-bisphosphatase class 1 (330 aa).

4 residues coordinate Mg(2+): Glu84, Asp103, Leu105, and Asp106. Substrate-binding positions include 106-109 (DGSS), Asn196, and Lys262. Glu268 is a Mg(2+) binding site.

The protein belongs to the FBPase class 1 family. As to quaternary structure, homotetramer. The cofactor is Mg(2+).

It localises to the cytoplasm. The enzyme catalyses beta-D-fructose 1,6-bisphosphate + H2O = beta-D-fructose 6-phosphate + phosphate. It functions in the pathway carbohydrate biosynthesis; gluconeogenesis. This chain is Fructose-1,6-bisphosphatase class 1, found in Shewanella sp. (strain MR-7).